The following is a 125-amino-acid chain: Glycine cleavage system H protein (125 aa).

Residues 22-103 enclose the Lipoyl-binding domain; sequence VFVVGITENA…AFTAWIFKIK (82 aa). Lys63 is modified (N6-lipoyllysine).

This sequence belongs to the GcvH family. As to quaternary structure, the glycine cleavage system is composed of four proteins: P, T, L and H. (R)-lipoate is required as a cofactor.

Its function is as follows. The glycine cleavage system catalyzes the degradation of glycine. The H protein shuttles the methylamine group of glycine from the P protein to the T protein. This chain is Glycine cleavage system H protein, found in Bordetella avium (strain 197N).